The chain runs to 259 residues: Aspartate/glutamate leucyltransferase (259 aa).

It belongs to the R-transferase family. Bpt subfamily.

Its subcellular location is the cytoplasm. It catalyses the reaction N-terminal L-glutamyl-[protein] + L-leucyl-tRNA(Leu) = N-terminal L-leucyl-L-glutamyl-[protein] + tRNA(Leu) + H(+). The enzyme catalyses N-terminal L-aspartyl-[protein] + L-leucyl-tRNA(Leu) = N-terminal L-leucyl-L-aspartyl-[protein] + tRNA(Leu) + H(+). Functions in the N-end rule pathway of protein degradation where it conjugates Leu from its aminoacyl-tRNA to the N-termini of proteins containing an N-terminal aspartate or glutamate. The protein is Aspartate/glutamate leucyltransferase of Sinorhizobium medicae (strain WSM419) (Ensifer medicae).